Here is a 190-residue protein sequence, read N- to C-terminus: MIGRITGTLIEKSPPVVCVDVNGVGYEIDVPMSTLYALPETGARVTLFTHLVVREDAQLLYGFGSSAERSTFRELIKVTGIGARTALAVLSGLSVAELSQAITLQETGRLTRVPGIGKKTAERLLLEMRGKLGADIGATPHAASGHQSDILNALLALGYSDKESQAALKKLPDGVDVSEGIRLALKALVR.

The interval 1-64 (MIGRITGTLI…EDAQLLYGFG (64 aa)) is domain I. The domain II stretch occupies residues 65–137 (SSAERSTFRE…MRGKLGADIG (73 aa)). Residues 137–141 (GATPH) form a flexible linker region. The interval 142–190 (AASGHQSDILNALLALGYSDKESQAALKKLPDGVDVSEGIRLALKALVR) is domain III.

This sequence belongs to the RuvA family. Homotetramer. Forms an RuvA(8)-RuvB(12)-Holliday junction (HJ) complex. HJ DNA is sandwiched between 2 RuvA tetramers; dsDNA enters through RuvA and exits via RuvB. An RuvB hexamer assembles on each DNA strand where it exits the tetramer. Each RuvB hexamer is contacted by two RuvA subunits (via domain III) on 2 adjacent RuvB subunits; this complex drives branch migration. In the full resolvosome a probable DNA-RuvA(4)-RuvB(12)-RuvC(2) complex forms which resolves the HJ.

It localises to the cytoplasm. The RuvA-RuvB-RuvC complex processes Holliday junction (HJ) DNA during genetic recombination and DNA repair, while the RuvA-RuvB complex plays an important role in the rescue of blocked DNA replication forks via replication fork reversal (RFR). RuvA specifically binds to HJ cruciform DNA, conferring on it an open structure. The RuvB hexamer acts as an ATP-dependent pump, pulling dsDNA into and through the RuvAB complex. HJ branch migration allows RuvC to scan DNA until it finds its consensus sequence, where it cleaves and resolves the cruciform DNA. This Bordetella pertussis (strain Tohama I / ATCC BAA-589 / NCTC 13251) protein is Holliday junction branch migration complex subunit RuvA.